The chain runs to 134 residues: Protein Turandot E (134 aa).

Residues 1–38 form the signal peptide; it reads MSYTRTIHSSASILKMNSALQISCLLVVLGCLLGSGHC.

The protein belongs to the Turandot family.

Its subcellular location is the secreted. In terms of biological role, a humoral factor that may play a role in stress tolerance. The protein is Protein Turandot E of Drosophila sechellia (Fruit fly).